The sequence spans 754 residues: MKNSIISYPRIGANRELKFAIEKYFKNQSSKEELLKSAKDLRIRHWQEIQKAGIDFIPSNDFSLYDNVLDAAVLFNIVHTKYKNLNLDALDEYFAQSRGYQGENGDVTALAMKKWFNTNYHYLVPECDNADIIALTGDKIFKEYLEAKELGIESKPVLIGIFTLFKLIAFKDEKTQKLAKEKLLNAYIELFDKLNELKVTWLELDEPYLVYDLSKEDIALFEEFYQELLNHKKDLKILLQSYFGDLRDIYPKLLESKFDALGLDFIEGKQSLALVQKYGFAKDKILFAGLINGKNIYTNDYAKSLKLIKELQKYTQNIILNTSCSLLHVPYSTEFESKLDSNYLKLFSFAKEKLQELKDLKEILNSSEENPLFRANQELFKNIPERLDEKVKARLKALKKEDFTRTPSFKERALIQKEFLKLPLLPTTTIGSFPQSADVRSNRLAFKQEKISAQNYTEFNQQKIKECIQIQEEIGLDVLVHGEFERNDMVEYFGENLKGFLFTQNGWVQSYGTRCVKPPVIWGDVSRTKPITLAWSKFAQSLSQKIVKGMLTGPVTILNWSFPREDISLKESTEQIALAIRDEVLDLENAGIKIIQIDEAALREKLPLRKSDWHSEYLDWAIPAFNLVHSGVKAKTQIHTHMCYSEFSDILKEIDAMDADVISFEASRSNLSLLDTLKAIRFKTEVGPGVYDIHSPRVPSVEELSLTIEKILNKLPKEQIWINPDCGLKTRAYEEVIASLKNLVTATQKIREQL.

5-methyltetrahydropteroyltri-L-glutamate is bound by residues 15-18 (RELK) and Lys-114. Residues 430 to 432 (IGS) and Glu-483 contribute to the L-homocysteine site. Residues 430–432 (IGS) and Glu-483 each bind L-methionine. 5-methyltetrahydropteroyltri-L-glutamate is bound by residues 514–515 (RC) and Trp-560. Asp-598 contributes to the L-homocysteine binding site. Asp-598 serves as a coordination point for L-methionine. Glu-604 is a 5-methyltetrahydropteroyltri-L-glutamate binding site. The Zn(2+) site is built by His-641, Cys-643, and Glu-665. His-694 acts as the Proton donor in catalysis. Cys-726 contributes to the Zn(2+) binding site.

This sequence belongs to the vitamin-B12 independent methionine synthase family. Zn(2+) is required as a cofactor.

It carries out the reaction 5-methyltetrahydropteroyltri-L-glutamate + L-homocysteine = tetrahydropteroyltri-L-glutamate + L-methionine. The protein operates within amino-acid biosynthesis; L-methionine biosynthesis via de novo pathway; L-methionine from L-homocysteine (MetE route): step 1/1. In terms of biological role, catalyzes the transfer of a methyl group from 5-methyltetrahydrofolate to homocysteine resulting in methionine formation. This Campylobacter jejuni (strain RM1221) protein is 5-methyltetrahydropteroyltriglutamate--homocysteine methyltransferase.